Reading from the N-terminus, the 232-residue chain is 5'-methylthioadenosine/S-adenosylhomocysteine nucleosidase (232 aa).

Catalysis depends on Glu-12, which acts as the Proton acceptor. Residues Gly-78, Ile-152, and 173–174 (ME) contribute to the substrate site. Asp-197 (proton donor) is an active-site residue.

It belongs to the PNP/UDP phosphorylase family. MtnN subfamily. In terms of assembly, homodimer.

The catalysed reaction is S-adenosyl-L-homocysteine + H2O = S-(5-deoxy-D-ribos-5-yl)-L-homocysteine + adenine. It carries out the reaction S-methyl-5'-thioadenosine + H2O = 5-(methylsulfanyl)-D-ribose + adenine. It catalyses the reaction 5'-deoxyadenosine + H2O = 5-deoxy-D-ribose + adenine. The protein operates within amino-acid biosynthesis; L-methionine biosynthesis via salvage pathway; S-methyl-5-thio-alpha-D-ribose 1-phosphate from S-methyl-5'-thioadenosine (hydrolase route): step 1/2. Catalyzes the irreversible cleavage of the glycosidic bond in both 5'-methylthioadenosine (MTA) and S-adenosylhomocysteine (SAH/AdoHcy) to adenine and the corresponding thioribose, 5'-methylthioribose and S-ribosylhomocysteine, respectively. Also cleaves 5'-deoxyadenosine, a toxic by-product of radical S-adenosylmethionine (SAM) enzymes, into 5-deoxyribose and adenine. Thus, is required for in vivo function of the radical SAM enzymes biotin synthase and lipoic acid synthase, that are inhibited by 5'-deoxyadenosine accumulation. The polypeptide is 5'-methylthioadenosine/S-adenosylhomocysteine nucleosidase (Escherichia coli O7:K1 (strain IAI39 / ExPEC)).